The chain runs to 675 residues: L-type lectin-domain containing receptor kinase IX.2 (675 aa).

Positions 1–35 (MLYFIFCQNLSSSSSMSNSILFLSLFLFLPFVVDS) are cleaved as a signal peptide. Asparagine 9, asparagine 39, asparagine 110, asparagine 146, asparagine 179, asparagine 186, asparagine 191, and asparagine 212 each carry an N-linked (GlcNAc...) asparagine glycan. The tract at residues 36–269 (LYFNFTSFRQ…EEHRLLSWEL (234 aa)) is legume-lectin like. Topologically, residues 36–281 (LYFNFTSFRQ…SLDSDKADSR (246 aa)) are extracellular. A helical membrane pass occupies residues 282–302 (IGLVIGISASGFVFLTFMVIT). The Cytoplasmic segment spans residues 303 to 675 (TVVVWSRKQR…VTFSGIEYGR (373 aa)). One can recognise a Protein kinase domain in the interval 350–631 (FSSHRKLGEG…KQGIQVMNFE (282 aa)). Residues 356–364 (LGEGGFGAV) and lysine 379 contribute to the ATP site. The active-site Proton acceptor is the aspartate 475.

This sequence in the C-terminal section; belongs to the protein kinase superfamily. Ser/Thr protein kinase family. The protein in the N-terminal section; belongs to the leguminous lectin family. As to quaternary structure, interacts with ABCG40.

It is found in the cell membrane. It catalyses the reaction L-seryl-[protein] + ATP = O-phospho-L-seryl-[protein] + ADP + H(+). It carries out the reaction L-threonyl-[protein] + ATP = O-phospho-L-threonyl-[protein] + ADP + H(+). In terms of biological role, promotes hydrogen peroxide H(2)O(2) production and cell death. Involved in resistance response to the pathogenic oomycetes Phytophthora infestans and Phytophthora capsici. The protein is L-type lectin-domain containing receptor kinase IX.2 of Arabidopsis thaliana (Mouse-ear cress).